The chain runs to 529 residues: Peptide chain release factor 3 (529 aa).

Residues 11–280 (NKRRTFAIIS…GLVKWAPAPM (270 aa)) form the tr-type G domain. Residues 20–27 (SHPDAGKT), 88–92 (DTPGH), and 142–145 (NKLD) contribute to the GTP site.

The protein belongs to the TRAFAC class translation factor GTPase superfamily. Classic translation factor GTPase family. PrfC subfamily.

It localises to the cytoplasm. Functionally, increases the formation of ribosomal termination complexes and stimulates activities of RF-1 and RF-2. It binds guanine nucleotides and has strong preference for UGA stop codons. It may interact directly with the ribosome. The stimulation of RF-1 and RF-2 is significantly reduced by GTP and GDP, but not by GMP. This chain is Peptide chain release factor 3, found in Proteus mirabilis (strain HI4320).